Consider the following 77-residue polypeptide: Metallocarboxypeptidase inhibitor (77 aa).

An N-terminal signal peptide occupies residues 1–32; it reads MAQKFTILFTILLVVIAAQDVMAQDATLTKLF. Q33 is subject to Pyrrolidone carboxylic acid. 3 cysteine pairs are disulfide-bonded: C39-C55, C43-C58, and C49-C65. Positions 70–77 are cleaved as a propeptide — hydrophobic peptide; that stretch reads GRAMAIGV.

This sequence to potato MCPI. Ovaries.

Functionally, may play a defensive role against insect attacks. This chain is Metallocarboxypeptidase inhibitor, found in Solanum lycopersicum (Tomato).